A 243-amino-acid chain; its full sequence is Adenosine 5'-phosphosulfate reductase (243 aa).

[4Fe-4S] cluster is bound by residues Cys-126, Cys-127, Cys-209, and Cys-212. The Nucleophile; cysteine thiosulfonate intermediate role is filled by Cys-235.

It belongs to the PAPS reductase family. CysH subfamily. Requires [4Fe-4S] cluster as cofactor.

The protein resides in the cytoplasm. The catalysed reaction is [thioredoxin]-disulfide + sulfite + AMP + 2 H(+) = adenosine 5'-phosphosulfate + [thioredoxin]-dithiol. It participates in sulfur metabolism; hydrogen sulfide biosynthesis; sulfite from sulfate. Its function is as follows. Catalyzes the formation of sulfite from adenosine 5'-phosphosulfate (APS) using thioredoxin as an electron donor. The protein is Adenosine 5'-phosphosulfate reductase of Staphylococcus epidermidis (strain ATCC 35984 / DSM 28319 / BCRC 17069 / CCUG 31568 / BM 3577 / RP62A).